Consider the following 315-residue polypeptide: Mycothiol acetyltransferase (315 aa).

N-acetyltransferase domains lie at 8–145 (VETS…LPLD) and 163–315 (VSLR…DATA). 1D-myo-inositol 2-(L-cysteinylamino)-2-deoxy-alpha-D-glucopyranoside is bound at residue Glu-39. Residues 81 to 83 (LVV) and 89 to 94 (HHGVGT) each bind acetyl-CoA. The 1D-myo-inositol 2-(L-cysteinylamino)-2-deoxy-alpha-D-glucopyranoside site is built by Glu-190, Lys-229, and Glu-243. Position 247 to 249 (247 to 249 (LGV)) interacts with acetyl-CoA. A 1D-myo-inositol 2-(L-cysteinylamino)-2-deoxy-alpha-D-glucopyranoside-binding site is contributed by Tyr-281. Residue 286 to 291 (NTVAIR) participates in acetyl-CoA binding.

Belongs to the acetyltransferase family. MshD subfamily. In terms of assembly, monomer.

The catalysed reaction is 1D-myo-inositol 2-(L-cysteinylamino)-2-deoxy-alpha-D-glucopyranoside + acetyl-CoA = mycothiol + CoA + H(+). Catalyzes the transfer of acetyl from acetyl-CoA to desacetylmycothiol (Cys-GlcN-Ins) to form mycothiol. This Sanguibacter keddieii (strain ATCC 51767 / DSM 10542 / NCFB 3025 / ST-74) protein is Mycothiol acetyltransferase.